The primary structure comprises 483 residues: UDP-N-acetylmuramyl-tripeptide synthetase (483 aa).

S43 serves as a coordination point for UDP-N-acetyl-alpha-D-muramoyl-L-alanyl-D-glutamate. 116–122 (GTKGKTT) contacts ATP. UDP-N-acetyl-alpha-D-muramoyl-L-alanyl-D-glutamate contacts are provided by residues 160–161 (TT), S187, and R195. K229 bears the N6-carboxylysine mark.

This sequence belongs to the MurCDEF family. MurE subfamily. Carboxylation is probably crucial for Mg(2+) binding and, consequently, for the gamma-phosphate positioning of ATP.

It is found in the cytoplasm. It participates in cell wall biogenesis; peptidoglycan biosynthesis. In terms of biological role, catalyzes the addition of an amino acid to the nucleotide precursor UDP-N-acetylmuramoyl-L-alanyl-D-glutamate (UMAG) in the biosynthesis of bacterial cell-wall peptidoglycan. The sequence is that of UDP-N-acetylmuramyl-tripeptide synthetase from Lactococcus lactis subsp. cremoris (strain SK11).